The sequence spans 238 residues: Ephrin-A3 (238 aa).

The signal sequence occupies residues 1–22 (MAAAPLLLLLLLVPVPLLPLLA). Residues 30-169 (GNRHAVYWNS…RMKVFVCCAS (140 aa)) enclose the Ephrin RBD domain. N-linked (GlcNAc...) asparagine glycans are attached at residues Asn-38, Asn-67, and Asn-100. Intrachain disulfides connect Cys-63–Cys-110 and Cys-99–Cys-158. Gly-214 is lipidated: GPI-anchor amidated glycine. The propeptide at 215 to 238 (TSPKREHLPLAVGIAFFLMTFLAS) is removed in mature form.

Belongs to the ephrin family. In terms of assembly, interacts with EPHA8; activates EPHA8. In terms of tissue distribution, expressed in brain, skeletal muscle, spleen, thymus, prostate, testis, ovary, small intestine, and peripheral blood leukocytes.

Its subcellular location is the cell membrane. Functionally, cell surface GPI-bound ligand for Eph receptors, a family of receptor tyrosine kinases which are crucial for migration, repulsion and adhesion during neuronal, vascular and epithelial development. Binds promiscuously Eph receptors residing on adjacent cells, leading to contact-dependent bidirectional signaling into neighboring cells. The signaling pathway downstream of the receptor is referred to as forward signaling while the signaling pathway downstream of the ephrin ligand is referred to as reverse signaling. The protein is Ephrin-A3 (EFNA3) of Homo sapiens (Human).